A 183-amino-acid polypeptide reads, in one-letter code: DELTA-miturgitoxin-Cp1c (183 aa).

A signal peptide spans 1–20 (MKFSLFFSVFFLAVLHACLS). A propeptide spanning residues 21 to 47 (ESEIDLEDEEHFMSSDSFLSEIQDESR) is cleaved from the precursor. Residues 44–47 (DESR) carry the Processing quadruplet motif motif. Intrachain disulfides connect Cys-51–Cys-66, Cys-58–Cys-75, Cys-65–Cys-88, Cys-77–Cys-86, Cys-115–Cys-130, Cys-122–Cys-139, Cys-129–Cys-157, and Cys-141–Cys-155. The tract at residues 164 to 177 (QAIEGALRIAKKLI) is predicted alpha-helix. Tryptophan amide is present on Trp-181.

Belongs to the neurotoxin 19 (CSTX) family. Double-CSTX subfamily. In terms of processing, cleavage of the propeptide depends on the processing quadruplet motif (XXXR, with at least one of X being E). As to expression, expressed by the venom gland.

It is found in the secreted. It localises to the target cell membrane. Spider venom toxin that exhibits cytolytic activity by forming an alpha-helix across the membrane. Lethal to insect larvae. Causes instant paralysis and death in the larvae of the flesh fly (S.carnaria) at doses of 20 ug/g, at doses of less than 10 ug/g causes reversible paralysis. Has cytolytic activity against insect Sf9 cells. Causes stable and irreversible depolarization of fly muscle fibers, leading to contracture at higher toxin concentrations. Destabilizes membranes. The sequence is that of DELTA-miturgitoxin-Cp1c from Cheiracanthium punctorium (Yellow sac spider).